The chain runs to 163 residues: Cytochrome c-type biogenesis protein CcmE (163 aa).

Topologically, residues 1-8 (MNPRRKKR) are cytoplasmic. Residues 9–29 (LTLAVALIVGVAGAASLLLYA) traverse the membrane as a helical; Signal-anchor for type II membrane protein segment. Residues 30-163 (LNSNLNLFYT…QEGVEKTAQY (134 aa)) lie on the Periplasmic side of the membrane. His131 and Tyr135 together coordinate heme.

The protein belongs to the CcmE/CycJ family.

The protein localises to the cell inner membrane. Heme chaperone required for the biogenesis of c-type cytochromes. Transiently binds heme delivered by CcmC and transfers the heme to apo-cytochromes in a process facilitated by CcmF and CcmH. The polypeptide is Cytochrome c-type biogenesis protein CcmE (Shewanella denitrificans (strain OS217 / ATCC BAA-1090 / DSM 15013)).